Reading from the N-terminus, the 202-residue chain is MSGNREFYFRRLHSLLGVIPVGIFLIQHLVVNQFAARGAEAFNSAAHFMDSLPFRYALEIFIIFLPLIYHAVYGVYIAFTAKNNAGQYSYMRNWLFVLQRVTGIITLIFVSWHVWETRIAAQMGAEVNFDMMANILSSPAMLGFYIVGVLSTIFHFSNGLWSFAVTWGITVTPRSQRISTYVTLIIFVALSYVGLKAIFAFV.

5 helical membrane passes run 12 to 31, 60 to 79, 93 to 113, 135 to 155, and 178 to 196; these read LHSL…HLVV, IFII…YIAF, NWLF…VSWH, ILSS…TIFH, and ISTY…VGLK. Heme-binding residues include His-28, His-70, His-113, and His-155.

This sequence belongs to the cytochrome b558 family. In terms of assembly, part of an enzyme complex containing three subunits: a flavoprotein, an iron-sulfur protein and cytochrome b-558.

The protein resides in the cell membrane. Its pathway is carbohydrate metabolism; tricarboxylic acid cycle. Its function is as follows. Di-heme cytochrome of the succinate dehydrogenase complex. The polypeptide is Succinate dehydrogenase cytochrome b558 subunit (sdhC) (Bacillus subtilis (strain 168)).